The following is a 164-amino-acid chain: 3-hydroxyacyl-[acyl-carrier-protein] dehydratase FabZ (164 aa).

The active site involves His70.

It belongs to the thioester dehydratase family. FabZ subfamily.

Its subcellular location is the cytoplasm. The enzyme catalyses a (3R)-hydroxyacyl-[ACP] = a (2E)-enoyl-[ACP] + H2O. Its function is as follows. Involved in unsaturated fatty acids biosynthesis. Catalyzes the dehydration of short chain beta-hydroxyacyl-ACPs and long chain saturated and unsaturated beta-hydroxyacyl-ACPs. This chain is 3-hydroxyacyl-[acyl-carrier-protein] dehydratase FabZ, found in Synechocystis sp. (strain ATCC 27184 / PCC 6803 / Kazusa).